Consider the following 212-residue polypeptide: Ribosomal RNA small subunit methyltransferase G (212 aa).

S-adenosyl-L-methionine contacts are provided by residues glycine 73, 127-128, and arginine 143; that span reads IE.

The protein belongs to the methyltransferase superfamily. RNA methyltransferase RsmG family.

It is found in the cytoplasm. The catalysed reaction is guanosine(527) in 16S rRNA + S-adenosyl-L-methionine = N(7)-methylguanosine(527) in 16S rRNA + S-adenosyl-L-homocysteine. In terms of biological role, specifically methylates the N7 position of guanine in position 527 of 16S rRNA. This is Ribosomal RNA small subunit methyltransferase G from Methylobacterium sp. (strain 4-46).